Reading from the N-terminus, the 308-residue chain is Ribosomal RNA small subunit methyltransferase H (308 aa).

S-adenosyl-L-methionine-binding positions include 36-38 (GGH), D55, F86, D103, and Q110.

This sequence belongs to the methyltransferase superfamily. RsmH family.

It localises to the cytoplasm. The catalysed reaction is cytidine(1402) in 16S rRNA + S-adenosyl-L-methionine = N(4)-methylcytidine(1402) in 16S rRNA + S-adenosyl-L-homocysteine + H(+). Its function is as follows. Specifically methylates the N4 position of cytidine in position 1402 (C1402) of 16S rRNA. This Helicobacter pylori (strain P12) protein is Ribosomal RNA small subunit methyltransferase H.